Reading from the N-terminus, the 102-residue chain is Large ribosomal subunit protein uL24c (102 aa).

Belongs to the universal ribosomal protein uL24 family. As to quaternary structure, part of the 50S ribosomal subunit.

It localises to the plastid. It is found in the chloroplast. Its function is as follows. One of two assembly initiator proteins, it binds directly to the 5'-end of the 23S rRNA, where it nucleates assembly of the 50S subunit. The protein is Large ribosomal subunit protein uL24c (rpl24) of Rhodomonas salina (Cryptomonas salina).